A 282-amino-acid polypeptide reads, in one-letter code: Aquaporin NIP1-1 (282 aa).

Transmembrane regions (helical) follow at residues 46 to 66 and 74 to 94; these read IIAEIFGTYFLMFAGCGAVTI and ITFPGVAIVWGLAVMVMVYAV. The short motif at 103–105 is the NPA 1 element; that stretch reads NPA. Helical transmembrane passes span 125-145, 162-182, and 186-206; these read VLAQMLGATLASGTLRLMFGG, SLVIEIITTFYLMFVISGVAT, and AIGELAGLAVGATILLNVLIA. The short motif at 215–217 is the NPA 2 element; sequence NPA. The helical transmembrane segment at 232–252 threads the bilayer; that stretch reads IWVYVVGPVVGAVAGAWAYNL.

This sequence belongs to the MIP/aquaporin (TC 1.A.8) family. NIP (TC 1.A.8.12) subfamily.

It is found in the membrane. Aquaporins facilitate the transport of water and small neutral solutes across cell membranes. The polypeptide is Aquaporin NIP1-1 (NIP1-1) (Zea mays (Maize)).